The sequence spans 134 residues: MLTTMLLSCALLLAMPTMLGAQIGLAPLEGIGRLDQALFPELQDLGLQPPLKRTTAERAEEALLQQAEAKALAEVLDPEGRKARSPRRCVRLHESCLGHQVPCCDPCATCYCRFFNAFCYCRKLGTATNPCSRT.

The signal sequence occupies residues 1–20 (MLTTMLLSCALLLAMPTMLG). The propeptide occupies 21 to 84 (AQIGLAPLEG…VLDPEGRKAR (64 aa)). 5 disulfide bridges follow: Cys89–Cys104, Cys96–Cys110, Cys103–Cys121, Cys107–Cys131, and Cys112–Cys119. In terms of domain architecture, Agouti spans 89–131 (CVRLHESCLGHQVPCCDPCATCYCRFFNAFCYCRKLGTATNPC). The interaction with melanocortin receptors stretch occupies residues 113–115 (RFF).

Interacts with melanocortin receptors MC3R, MC4R and MC5R.

The protein localises to the secreted. Its subcellular location is the golgi apparatus lumen. In terms of biological role, plays a role in weight homeostasis. Involved in the control of feeding behavior through the central melanocortin system. Acts as alpha melanocyte-stimulating hormone antagonist by inhibiting cAMP production mediated by stimulation of melanocortin receptors within the hypothalamus and adrenal gland. Has very low activity with MC5R. Is an inverse agonist for MC3R and MC4R being able to suppress their constitutive activity. It promotes MC3R and MC4R endocytosis in an arrestin-dependent manner. The sequence is that of Agouti-related protein (AGRP) from Sus scrofa (Pig).